The chain runs to 185 residues: MVRYAATSANPAKSASARGSYLRVSYKNTRETAQAISGWKLERAQKYLDQVLDHQRAIPFRRFNSSIGRTGQGKEFGVTKARWPAKSVNFIKDLLRNGQANAESKGLDASKLKVSHIQVNQAPKQRRRTYRAHGRINAYQSSPCHIELILTEENEAVEKADDSKKVRLNVRQRGRLATQKRVTAA.

Belongs to the universal ribosomal protein uL22 family.

The protein is Large ribosomal subunit protein uL22 (RPL17) of Debaryomyces hansenii (strain ATCC 36239 / CBS 767 / BCRC 21394 / JCM 1990 / NBRC 0083 / IGC 2968) (Yeast).